The sequence spans 272 residues: Shikimate dehydrogenase (NADP(+)) (272 aa).

Residues 14 to 16 and threonine 61 contribute to the shikimate site; that span reads SKS. The active-site Proton acceptor is the lysine 65. NADP(+) is bound at residue glutamate 77. Asparagine 86 and aspartate 102 together coordinate shikimate. Residues 126-130, 150-155, and methionine 213 contribute to the NADP(+) site; these read GAGGA and NRTFSK. Tyrosine 215 is a binding site for shikimate. Residue glycine 237 participates in NADP(+) binding.

Belongs to the shikimate dehydrogenase family. As to quaternary structure, homodimer.

The enzyme catalyses shikimate + NADP(+) = 3-dehydroshikimate + NADPH + H(+). It participates in metabolic intermediate biosynthesis; chorismate biosynthesis; chorismate from D-erythrose 4-phosphate and phosphoenolpyruvate: step 4/7. Functionally, involved in the biosynthesis of the chorismate, which leads to the biosynthesis of aromatic amino acids. Catalyzes the reversible NADPH linked reduction of 3-dehydroshikimate (DHSA) to yield shikimate (SA). This is Shikimate dehydrogenase (NADP(+)) from Psychromonas ingrahamii (strain DSM 17664 / CCUG 51855 / 37).